The following is a 408-amino-acid chain: LL-diaminopimelate aminotransferase (408 aa).

Residues Tyr15 and Gly42 each coordinate substrate. Residues Tyr72, 108–109 (SK), Tyr132, Asn187, Tyr218, and 246–248 (SFS) each bind pyridoxal 5'-phosphate. Substrate-binding residues include Lys109, Tyr132, and Asn187. The residue at position 249 (Lys249) is an N6-(pyridoxal phosphate)lysine. Pyridoxal 5'-phosphate-binding residues include Arg257 and Asn291. Substrate contacts are provided by Asn291 and Arg387.

Belongs to the class-I pyridoxal-phosphate-dependent aminotransferase family. LL-diaminopimelate aminotransferase subfamily. As to quaternary structure, homodimer. Pyridoxal 5'-phosphate serves as cofactor.

It catalyses the reaction (2S,6S)-2,6-diaminopimelate + 2-oxoglutarate = (S)-2,3,4,5-tetrahydrodipicolinate + L-glutamate + H2O + H(+). It participates in amino-acid biosynthesis; L-lysine biosynthesis via DAP pathway; LL-2,6-diaminopimelate from (S)-tetrahydrodipicolinate (aminotransferase route): step 1/1. Functionally, involved in the synthesis of meso-diaminopimelate (m-DAP or DL-DAP), required for both lysine and peptidoglycan biosynthesis. Catalyzes the direct conversion of tetrahydrodipicolinate to LL-diaminopimelate. This chain is LL-diaminopimelate aminotransferase, found in Prochlorococcus marinus (strain NATL1A).